Consider the following 335-residue polypeptide: [Citrate [pro-3S]-lyase] ligase (335 aa).

The region spanning 1-131 (MQFERISTEQ…SATRLQKQCS (131 aa)) is the N-acetyltransferase domain.

It carries out the reaction holo-[citrate lyase ACP] + acetate + ATP = acetyl-[citrate lyase ACP] + AMP + diphosphate. Its function is as follows. Acetylation of prosthetic group (2-(5''-phosphoribosyl)-3'-dephosphocoenzyme-A) of the gamma subunit of citrate lyase. This chain is [Citrate [pro-3S]-lyase] ligase (citC), found in Haemophilus influenzae (strain ATCC 51907 / DSM 11121 / KW20 / Rd).